Consider the following 314-residue polypeptide: tRNA(Ile)-lysidine synthase, chloroplastic (314 aa).

ATP is bound at residue 31–36; the sequence is SGGQDS.

The protein belongs to the tRNA(Ile)-lysidine synthase family.

The protein resides in the plastid. The protein localises to the chloroplast. It catalyses the reaction cytidine(34) in tRNA(Ile2) + L-lysine + ATP = lysidine(34) in tRNA(Ile2) + AMP + diphosphate + H(+). Ligates lysine onto the cytidine present at position 34 of the AUA codon-specific tRNA(Ile) that contains the anticodon CAU, in an ATP-dependent manner. Cytidine is converted to lysidine, thus changing the amino acid specificity of the tRNA from methionine to isoleucine. This chain is tRNA(Ile)-lysidine synthase, chloroplastic, found in Cyanidium caldarium (Red alga).